The following is a 502-amino-acid chain: Hexokinase-4 (502 aa).

The helical transmembrane segment at 4–24 threads the bilayer; that stretch reads VLVMLTAAAAVVACSVATVMV. Residues 35–491 enclose the Hexokinase domain; it reads RRVVGLLKDL…SSIGSALLLA (457 aa). The segment at 90–228 is hexokinase small subdomain; sequence NGSETGTYYA…GLDIRVAALV (139 aa). Gly-104 and Ser-105 together coordinate ADP. Positions 194, 195, 229, and 230 each coordinate D-glucose. The interval 229–480 is hexokinase large subdomain; that stretch reads NDTVGALSFG…QHVVVKAMED (252 aa). Position 253 (Thr-253) interacts with ADP. The D-glucose site is built by Asn-256, Glu-284, and Glu-315. Position 445 (Gly-445) interacts with ADP.

It belongs to the hexokinase family.

The protein localises to the mitochondrion outer membrane. It carries out the reaction a D-hexose + ATP = a D-hexose 6-phosphate + ADP + H(+). It catalyses the reaction D-fructose + ATP = D-fructose 6-phosphate + ADP + H(+). The enzyme catalyses D-glucose + ATP = D-glucose 6-phosphate + ADP + H(+). It participates in carbohydrate metabolism; hexose metabolism. The protein operates within carbohydrate degradation; glycolysis; D-glyceraldehyde 3-phosphate and glycerone phosphate from D-glucose: step 1/4. Functionally, fructose and glucose phosphorylating enzyme. May be involved in the phosphorylation of glucose during the export from mitochondrion to cytosol. The chain is Hexokinase-4 from Arabidopsis thaliana (Mouse-ear cress).